Here is a 230-residue protein sequence, read N- to C-terminus: Cytochrome c oxidase subunit 2 (230 aa).

At 1-14 (MAHPSQLGFQDAAS) the chain is on the mitochondrial intermembrane side. Residues 15 to 45 (PVMEELLHFHDHALMIVLLISTLVLYIIVAM) traverse the membrane as a helical segment. Residues 46-59 (VSTKLTNMYILDSQ) lie on the Mitochondrial matrix side of the membrane. The helical transmembrane segment at 60 to 87 (EIEIVWTVLPAVILILIALPSLRILYLM) threads the bilayer. Topologically, residues 88–230 (DEINDPHLTI…KWSTMMLEDA (143 aa)) are mitochondrial intermembrane. His-161, Cys-196, Glu-198, Cys-200, His-204, and Met-207 together coordinate Cu cation. Glu-198 contacts Mg(2+).

This sequence belongs to the cytochrome c oxidase subunit 2 family. As to quaternary structure, component of the cytochrome c oxidase (complex IV, CIV), a multisubunit enzyme composed of 14 subunits. The complex is composed of a catalytic core of 3 subunits MT-CO1, MT-CO2 and MT-CO3, encoded in the mitochondrial DNA, and 11 supernumerary subunits COX4I, COX5A, COX5B, COX6A, COX6B, COX6C, COX7A, COX7B, COX7C, COX8 and NDUFA4, which are encoded in the nuclear genome. The complex exists as a monomer or a dimer and forms supercomplexes (SCs) in the inner mitochondrial membrane with NADH-ubiquinone oxidoreductase (complex I, CI) and ubiquinol-cytochrome c oxidoreductase (cytochrome b-c1 complex, complex III, CIII), resulting in different assemblies (supercomplex SCI(1)III(2)IV(1) and megacomplex MCI(2)III(2)IV(2)). Found in a complex with TMEM177, COA6, COX18, COX20, SCO1 and SCO2. Interacts with TMEM177 in a COX20-dependent manner. Interacts with COX20. Interacts with COX16. Cu cation serves as cofactor.

Its subcellular location is the mitochondrion inner membrane. The enzyme catalyses 4 Fe(II)-[cytochrome c] + O2 + 8 H(+)(in) = 4 Fe(III)-[cytochrome c] + 2 H2O + 4 H(+)(out). Component of the cytochrome c oxidase, the last enzyme in the mitochondrial electron transport chain which drives oxidative phosphorylation. The respiratory chain contains 3 multisubunit complexes succinate dehydrogenase (complex II, CII), ubiquinol-cytochrome c oxidoreductase (cytochrome b-c1 complex, complex III, CIII) and cytochrome c oxidase (complex IV, CIV), that cooperate to transfer electrons derived from NADH and succinate to molecular oxygen, creating an electrochemical gradient over the inner membrane that drives transmembrane transport and the ATP synthase. Cytochrome c oxidase is the component of the respiratory chain that catalyzes the reduction of oxygen to water. Electrons originating from reduced cytochrome c in the intermembrane space (IMS) are transferred via the dinuclear copper A center (CU(A)) of subunit 2 and heme A of subunit 1 to the active site in subunit 1, a binuclear center (BNC) formed by heme A3 and copper B (CU(B)). The BNC reduces molecular oxygen to 2 water molecules using 4 electrons from cytochrome c in the IMS and 4 protons from the mitochondrial matrix. This Oncorhynchus mykiss (Rainbow trout) protein is Cytochrome c oxidase subunit 2 (mt-co2).